The following is a 106-amino-acid chain: Phosphoribosyl-ATP pyrophosphatase (106 aa).

The protein belongs to the PRA-PH family.

Its subcellular location is the cytoplasm. The enzyme catalyses 1-(5-phospho-beta-D-ribosyl)-ATP + H2O = 1-(5-phospho-beta-D-ribosyl)-5'-AMP + diphosphate + H(+). Its pathway is amino-acid biosynthesis; L-histidine biosynthesis; L-histidine from 5-phospho-alpha-D-ribose 1-diphosphate: step 2/9. This chain is Phosphoribosyl-ATP pyrophosphatase, found in Geotalea daltonii (strain DSM 22248 / JCM 15807 / FRC-32) (Geobacter daltonii).